The chain runs to 286 residues: Aspartate-semialdehyde dehydrogenase (286 aa).

NADP(+)-binding positions include 10–13 (RGMV), 37–38 (TS), and glutamine 74. Arginine 103 is a phosphate binding site. The Acyl-thioester intermediate role is filled by cysteine 136. Glutamine 163 is a substrate binding site. NADP(+)-binding positions include 166–167 (SG) and proline 194. Glutamate 242 contacts substrate. Lysine 245 serves as a coordination point for phosphate. Substrate is bound at residue arginine 269. Histidine 276 (proton acceptor) is an active-site residue.

Belongs to the aspartate-semialdehyde dehydrogenase family. As to quaternary structure, homodimer.

The enzyme catalyses L-aspartate 4-semialdehyde + phosphate + NADP(+) = 4-phospho-L-aspartate + NADPH + H(+). It functions in the pathway amino-acid biosynthesis; L-lysine biosynthesis via DAP pathway; (S)-tetrahydrodipicolinate from L-aspartate: step 2/4. It participates in amino-acid biosynthesis; L-methionine biosynthesis via de novo pathway; L-homoserine from L-aspartate: step 2/3. Its pathway is amino-acid biosynthesis; L-threonine biosynthesis; L-threonine from L-aspartate: step 2/5. In terms of biological role, catalyzes the NADPH-dependent formation of L-aspartate-semialdehyde (L-ASA) by the reductive dephosphorylation of L-aspartyl-4-phosphate. This chain is Aspartate-semialdehyde dehydrogenase (asd), found in Actinobacillus pleuropneumoniae (Haemophilus pleuropneumoniae).